The primary structure comprises 459 residues: ATP-dependent protease ATPase subunit HslU (459 aa).

Residues valine 26, 68–73 (GVGKTE), aspartate 271, glutamate 337, and arginine 409 contribute to the ATP site.

It belongs to the ClpX chaperone family. HslU subfamily. In terms of assembly, a double ring-shaped homohexamer of HslV is capped on each side by a ring-shaped HslU homohexamer. The assembly of the HslU/HslV complex is dependent on binding of ATP.

It is found in the cytoplasm. ATPase subunit of a proteasome-like degradation complex; this subunit has chaperone activity. The binding of ATP and its subsequent hydrolysis by HslU are essential for unfolding of protein substrates subsequently hydrolyzed by HslV. HslU recognizes the N-terminal part of its protein substrates and unfolds these before they are guided to HslV for hydrolysis. The polypeptide is ATP-dependent protease ATPase subunit HslU (Xylella fastidiosa (strain M23)).